A 213-amino-acid polypeptide reads, in one-letter code: Orotate phosphoribosyltransferase (213 aa).

K26 provides a ligand contact to 5-phospho-alpha-D-ribose 1-diphosphate. 34–35 lines the orotate pocket; sequence FF. 5-phospho-alpha-D-ribose 1-diphosphate contacts are provided by residues 72-73, R99, K100, K103, H105, and 124-132; these read YK and DDVITAGTA. T128 and R156 together coordinate orotate.

The protein belongs to the purine/pyrimidine phosphoribosyltransferase family. PyrE subfamily. As to quaternary structure, homodimer. It depends on Mg(2+) as a cofactor.

It carries out the reaction orotidine 5'-phosphate + diphosphate = orotate + 5-phospho-alpha-D-ribose 1-diphosphate. It functions in the pathway pyrimidine metabolism; UMP biosynthesis via de novo pathway; UMP from orotate: step 1/2. Catalyzes the transfer of a ribosyl phosphate group from 5-phosphoribose 1-diphosphate to orotate, leading to the formation of orotidine monophosphate (OMP). The sequence is that of Orotate phosphoribosyltransferase from Pseudomonas syringae pv. tomato (strain ATCC BAA-871 / DC3000).